A 353-amino-acid polypeptide reads, in one-letter code: Quinolinate synthase (353 aa).

Residues His-47 and Ser-68 each coordinate iminosuccinate. A [4Fe-4S] cluster-binding site is contributed by Cys-113. Residues Tyr-139–Asn-141 and Ser-156 contribute to the iminosuccinate site. Cys-200 contributes to the [4Fe-4S] cluster binding site. Iminosuccinate is bound by residues His-226–Glu-228 and Thr-243. Cys-297 contributes to the [4Fe-4S] cluster binding site.

It belongs to the quinolinate synthase family. Type 1 subfamily. It depends on [4Fe-4S] cluster as a cofactor.

The protein localises to the cytoplasm. It catalyses the reaction iminosuccinate + dihydroxyacetone phosphate = quinolinate + phosphate + 2 H2O + H(+). The protein operates within cofactor biosynthesis; NAD(+) biosynthesis; quinolinate from iminoaspartate: step 1/1. Its function is as follows. Catalyzes the condensation of iminoaspartate with dihydroxyacetone phosphate to form quinolinate. This chain is Quinolinate synthase, found in Vibrio vulnificus (strain YJ016).